The primary structure comprises 377 residues: Succinyl-diaminopimelate desuccinylase (377 aa).

His66 is a Zn(2+) binding site. The active site involves Asp68. Asp99 serves as a coordination point for Zn(2+). The active-site Proton acceptor is Glu133. Positions 134, 162, and 348 each coordinate Zn(2+).

This sequence belongs to the peptidase M20A family. DapE subfamily. Homodimer. Requires Zn(2+) as cofactor. Co(2+) serves as cofactor.

The catalysed reaction is N-succinyl-(2S,6S)-2,6-diaminopimelate + H2O = (2S,6S)-2,6-diaminopimelate + succinate. The protein operates within amino-acid biosynthesis; L-lysine biosynthesis via DAP pathway; LL-2,6-diaminopimelate from (S)-tetrahydrodipicolinate (succinylase route): step 3/3. Functionally, catalyzes the hydrolysis of N-succinyl-L,L-diaminopimelic acid (SDAP), forming succinate and LL-2,6-diaminopimelate (DAP), an intermediate involved in the bacterial biosynthesis of lysine and meso-diaminopimelic acid, an essential component of bacterial cell walls. The protein is Succinyl-diaminopimelate desuccinylase of Chromobacterium violaceum (strain ATCC 12472 / DSM 30191 / JCM 1249 / CCUG 213 / NBRC 12614 / NCIMB 9131 / NCTC 9757 / MK).